Here is a 364-residue protein sequence, read N- to C-terminus: MLWILGPHTGPLLFDAVASLDTSPLAAARYHGDQDVAPGVLDFAVNVRHDRPPEWLVRQLAALLPELARYPSTDDVHRAQDAVAERHGRTRDEVLPLVGAAEGFALLHNLSPVRAAIVVPAFTEPAIALSAAGITAHHVVLKPPFVLDTAHVPDDADLVVVGNPTNPTSVLHLREQLLELRRPGRILVVDEAFADWVPGEPQSLADDSLPDVLVLRSLTKTWSLAGLRVGYALGSPDVLARLTVQRAHWPLGTLQLTAIAACCAPRAVAAAAADAVRLTALRAEMVAGLRSVGAEVVDGAAPFVLFNIADADGLRNYLQSKGIAVRRGDTFVGLDARYLRAAVRPEWPVLVAAIAEWAKRGGRR.

K220 is subject to N6-(pyridoxal phosphate)lysine.

This sequence belongs to the class-I pyridoxal-phosphate-dependent aminotransferase family. Monomer. The cofactor is pyridoxal 5'-phosphate.

The protein resides in the secreted. It is found in the cell wall. It catalyses the reaction L-histidinol phosphate + 2-oxoglutarate = 3-(imidazol-4-yl)-2-oxopropyl phosphate + L-glutamate. In terms of biological role, aminotransferase that catalyzes the conversion of histidinol phosphate and 2-oxoglutarate into L-glutamate and imidazole acetol phosphate. Might play a significant role in mediating histidine biosynthesis during infection. Facilitates mycobacterial survival and virulence in macrophages. In Mycobacterium bovis (strain ATCC BAA-935 / AF2122/97), this protein is Histidinol-phosphate aminotransferase BQ2027_MB2256C.